We begin with the raw amino-acid sequence, 387 residues long: Protein SGT1 homolog (387 aa).

3 TPR repeats span residues 1 to 34 (MEQL…SNNA), 36 to 67 (AFFK…DSNN), and 68 to 101 (SKYY…DSEN). Disordered stretches follow at residues 110-193 (KSKA…PSSG) and 299-323 (SPAV…EEKL). Over residues 118–127 (NPTTTTTTTP) the composition is skewed to low complexity. Positions 128–138 (TPTPTPTPAPQ) are enriched in pro residues. Positions 139 to 185 (PVTTTTNPTPIPTTSNTTTTTNNNNNNNNNNNNNNNNNNTTTDSTTT) are enriched in low complexity. The region spanning 193-282 (GNKVRHEWYQ…SRAIKWDTLE (90 aa)) is the CS domain. The region spanning 301–387 (AVPSPYASKK…KGLEFKQYEK (87 aa)) is the SGS domain. The span at 308-323 (SKKDWDKLPNEPEEKL) shows a compositional bias: basic and acidic residues.

This sequence belongs to the SGT1 family.

May play a role in ubiquitination and subsequent proteasomal degradation of target proteins. The protein is Protein SGT1 homolog (sugt1) of Dictyostelium discoideum (Social amoeba).